The sequence spans 365 residues: Neutral protease 2 homolog mep20 (365 aa).

A signal peptide spans 1–19; that stretch reads MKVTILASAILALINGALA. Residues 20–172 constitute a propeptide that is removed on maturation; the sequence is LPANTPTLDV…PQAIKLLDRR (153 aa). N73 carries N-linked (GlcNAc...) asparagine glycosylation. 2 disulfides stabilise this stretch: C178–C249 and C256–C274. Residue H299 participates in Zn(2+) binding. E300 is an active-site residue. Zn(2+) contacts are provided by H303 and D314. N-linked (GlcNAc...) asparagine glycosylation occurs at N351.

Belongs to the peptidase M35 family. Zn(2+) serves as cofactor.

It localises to the secreted. The enzyme catalyses Preferential cleavage of bonds with hydrophobic residues in P1'. Also 3-Asn-|-Gln-4 and 8-Gly-|-Ser-9 bonds in insulin B chain.. Secreted metalloproteinase that allows assimilation of proteinaceous substrates. Shows high activities on basic nuclear substrates such as histone and protamine. May be involved in virulence. The polypeptide is Neutral protease 2 homolog mep20 (mep20) (Aspergillus fumigatus (Neosartorya fumigata)).